The following is an 892-amino-acid chain: Inner centromere protein B (892 aa).

Disordered stretches follow at residues 50 to 124 (AEPE…KRMT), 160 to 182 (EHERRSAEQKLRESEIEDSEMKT), 255 to 286 (LVNEQPLNLSNESATPTGSKSDRRSVRRSLVV), 305 to 470 (KRES…PPPH), 502 to 555 (KRNT…RRED), 569 to 687 (QLEE…RERE), 702 to 760 (ERAA…AAAA), and 797 to 819 (NYGMDLNSDDSTDDESQPRKPIP). Residues 60–69 (SQKRRRKKRT) show a composition bias toward basic residues. Residues 90-99 (SANWSSSVRR) are compositionally biased toward low complexity. A compositionally biased stretch (polar residues) spans 259–272 (QPLNLSNESATPTG). Over residues 305–315 (KRESMTREAVR) the composition is skewed to basic and acidic residues. The segment covering 316 to 326 (KSIRQSISKKK) has biased composition (basic residues). Residues 332–343 (SSTSSQRSCHSS) show a composition bias toward low complexity. Positions 431-444 (RAVDELSDDERPSE) are enriched in basic and acidic residues. Residues 455–470 (PSPPCPPSKIVKPPPH) are compositionally biased toward pro residues. Basic and acidic residues-rich tracts occupy residues 509–555 (PDPK…RRED), 569–602 (QLEEEKKKKFEQKFAQIDEKSEKVREDRMAEEKA), 609–687 (KKQE…RERE), and 702–754 (ERAA…KAKE). Residues 512–725 (KSEEKERQRL…EERKKREQQQ (214 aa)) form an SAH region. The interval 802–876 (LNSDDSTDDE…RTSSAVWHSP (75 aa)) is IN box. Ser869 and Ser870 each carry phosphoserine.

It belongs to the INCENP family. As to quaternary structure, component of the CPC at least composed of survivin/birc5, incenp, cdca8/borealin and/or cdca9/dasra-A, and aurkb/aurora-B. Interacts (via C-terminus) with aurkb (via N-terminus and kinase domain). Interacts (via N-terminus) with birc5.1, birc5.2, cdca8 and cdca9. Interacts with mtus1.

It localises to the nucleus. The protein resides in the chromosome. The protein localises to the centromere. Its subcellular location is the cytoplasm. It is found in the cytoskeleton. It localises to the spindle. The protein resides in the midbody. The protein localises to the kinetochore. Its function is as follows. Component of the chromosomal passenger complex (CPC), a complex that acts as a key regulator of mitosis. The CPC complex has essential functions at the centromere in ensuring correct chromosome alignment and segregation and is required for chromatin-induced microtubule stabilization and spindle assembly. Acts as a scaffold regulating CPC localization and activity. The C-terminus associates with aurkb/aurora-B, the N-terminus associated with cdca8/borealin and/or cdca9/dasra-A tethers the CPC to the inner centromere, and the microtubule binding activity within the central SAH domain directs aurkb/aurora-B toward substrates near microtubules. Activates aurkb. This Xenopus laevis (African clawed frog) protein is Inner centromere protein B (incenp-b).